Consider the following 511-residue polypeptide: 2-isopropylmalate synthase (511 aa).

The region spanning 6–269 (IIIFDTTLRD…YTDIKCENIF (264 aa)) is the Pyruvate carboxyltransferase domain. Residues Asp15, His203, His205, and Asn239 each coordinate Mn(2+). Residues 394-511 (ILEKLSVISG…SLKVEERKMA (118 aa)) are regulatory domain.

Belongs to the alpha-IPM synthase/homocitrate synthase family. LeuA type 1 subfamily. As to quaternary structure, homodimer. Requires Mn(2+) as cofactor.

It localises to the cytoplasm. It catalyses the reaction 3-methyl-2-oxobutanoate + acetyl-CoA + H2O = (2S)-2-isopropylmalate + CoA + H(+). It participates in amino-acid biosynthesis; L-leucine biosynthesis; L-leucine from 3-methyl-2-oxobutanoate: step 1/4. Functionally, catalyzes the condensation of the acetyl group of acetyl-CoA with 3-methyl-2-oxobutanoate (2-ketoisovalerate) to form 3-carboxy-3-hydroxy-4-methylpentanoate (2-isopropylmalate). The polypeptide is 2-isopropylmalate synthase (Campylobacter jejuni subsp. jejuni serotype O:6 (strain 81116 / NCTC 11828)).